The following is a 378-amino-acid chain: Erythronate-4-phosphate dehydrogenase (378 aa).

The substrate site is built by Ser45 and Thr66. NAD(+)-binding residues include Asp146 and Thr175. The active site involves Arg208. Residue Asp232 coordinates NAD(+). Glu237 is a catalytic residue. Residue His254 is the Proton donor of the active site. Gly257 lines the NAD(+) pocket. Tyr258 is a substrate binding site.

The protein belongs to the D-isomer specific 2-hydroxyacid dehydrogenase family. PdxB subfamily. Homodimer.

Its subcellular location is the cytoplasm. It carries out the reaction 4-phospho-D-erythronate + NAD(+) = (R)-3-hydroxy-2-oxo-4-phosphooxybutanoate + NADH + H(+). It participates in cofactor biosynthesis; pyridoxine 5'-phosphate biosynthesis; pyridoxine 5'-phosphate from D-erythrose 4-phosphate: step 2/5. Functionally, catalyzes the oxidation of erythronate-4-phosphate to 3-hydroxy-2-oxo-4-phosphonooxybutanoate. This Enterobacter sp. (strain 638) protein is Erythronate-4-phosphate dehydrogenase.